The sequence spans 113 residues: Large ribosomal subunit protein uL22 (113 aa).

It belongs to the universal ribosomal protein uL22 family. As to quaternary structure, part of the 50S ribosomal subunit.

This protein binds specifically to 23S rRNA; its binding is stimulated by other ribosomal proteins, e.g. L4, L17, and L20. It is important during the early stages of 50S assembly. It makes multiple contacts with different domains of the 23S rRNA in the assembled 50S subunit and ribosome. Functionally, the globular domain of the protein is located near the polypeptide exit tunnel on the outside of the subunit, while an extended beta-hairpin is found that lines the wall of the exit tunnel in the center of the 70S ribosome. In Geobacillus kaustophilus (strain HTA426), this protein is Large ribosomal subunit protein uL22.